The sequence spans 240 residues: LexA repressor (240 aa).

The H-T-H motif DNA-binding region spans F26–T46. Catalysis depends on for autocatalytic cleavage activity residues S161 and K199.

The protein belongs to the peptidase S24 family. As to quaternary structure, homodimer.

It carries out the reaction Hydrolysis of Ala-|-Gly bond in repressor LexA.. Functionally, represses a number of genes involved in the response to DNA damage (SOS response), including recA and lexA. In the presence of single-stranded DNA, RecA interacts with LexA causing an autocatalytic cleavage which disrupts the DNA-binding part of LexA, leading to derepression of the SOS regulon and eventually DNA repair. This is LexA repressor from Brucella melitensis biotype 1 (strain ATCC 23456 / CCUG 17765 / NCTC 10094 / 16M).